The sequence spans 323 residues: MNSPKKITVTGAAGQIAYSLLWRIANGEVYGADTPVELNLLEIPDALGGAEGVAMELSDSAFPLLHNINITADLNEAFDGANAAFLVGAKPRGKGEERAALLSNNGKIFGPQGKAINDHAAQDIRVLVVGNPANTNALIAMSNAPDVPQSRFNAMMRLDHNRAISQLATKTGRLSSEFQDVVVWGNHSAAQFPDITYATVGGEKVSDLVDHDWYVNEFIPRVAKRGAEIIEVRGKSSAASAASSAVDHMRDWIQGTETWASAAIPSTGAYGIPEGIILGLPTVSRNGEWEVVEGLEINDFQRARIDANVEELQGEREAVKDLL.

Residue 11–17 coordinates NAD(+); it reads GAAGQIA. Substrate contacts are provided by Arg92 and Arg98. NAD(+)-binding positions include Asn105, Gln112, and 129 to 131; that span reads VGN. Substrate-binding residues include Asn131 and Arg162. Catalysis depends on His187, which acts as the Proton acceptor.

This sequence belongs to the LDH/MDH superfamily. MDH type 2 family.

The catalysed reaction is (S)-malate + NAD(+) = oxaloacetate + NADH + H(+). Its function is as follows. Catalyzes the reversible oxidation of malate to oxaloacetate. The polypeptide is Malate dehydrogenase (Corynebacterium efficiens (strain DSM 44549 / YS-314 / AJ 12310 / JCM 11189 / NBRC 100395)).